A 217-amino-acid chain; its full sequence is Large ribosomal subunit protein uL4c (217 aa).

Residues 51 to 85 are disordered; the sequence is HRNRNAHTQTRGEVSGGGRKPWKQKGTGRARAGSN.

It belongs to the universal ribosomal protein uL4 family. As to quaternary structure, part of the 50S ribosomal subunit.

The protein localises to the plastid. It is found in the chloroplast. Functionally, probably binds the 23S rRNA. The polypeptide is Large ribosomal subunit protein uL4c (rpl4) (Gracilaria tenuistipitata var. liui (Red alga)).